The primary structure comprises 390 residues: Zinc transporter 7 (390 aa).

The Cytoplasmic portion of the chain corresponds to 1 to 37 (MLPLSIKDDEYKPPKFNLVRKVSGWIRSIFSDTTSRN). The helical transmembrane segment at 38-58 (LFCFLCLNLSFAFVELFYGIW) threads the bilayer. Residues 59–67 (SNSLGLISD) are Lumenal-facing. Residues 68 to 88 (SFHMFFDCTALLAGLAASVIS) form a helical membrane-spanning segment. Over 89–102 (RWKTNEAFSYGYVR) the chain is Cytoplasmic. Residues 103 to 123 (AEVLAGFVNGLFLIFTAFFIF) traverse the membrane as a helical segment. Topologically, residues 124–140 (SEGIERALDTPEVHHER) are lumenal. A helical transmembrane segment spans residues 141-161 (LLPVSILGFLVNLIGIFVFQH). The his-rich loop stretch occupies residues 161–226 (HGGGHGHSHE…SHDQSHKHGH (66 aa)). Topologically, residues 162 to 250 (GGGHGHSHES…TGSSKQILEG (89 aa)) are cytoplasmic. Residues 167 to 243 (HSHESGHGHS…DEPPEEHTGS (77 aa)) form a disordered region. Residues 177–186 (HSLFNGSLSH) show a composition bias toward low complexity. Over residues 187-208 (GHSHSHGGSHGHSHGGGHGHSH) the composition is skewed to basic residues. Composition is skewed to basic and acidic residues over residues 209–222 (SHGE…DQSH) and 232–242 (CHDEPPEEHTG). A helical transmembrane segment spans residues 251–271 (VFLHIVADALGSVGVIISTIL). Over 272–276 (MQRYG) the chain is Lumenal. The helical transmembrane segment at 277 to 297 (LMIADPICSMLIALLIFVSVI) threads the bilayer. Residues 298–390 (PLLKQSIGIL…LYVQIDMAAM (93 aa)) lie on the Cytoplasmic side of the membrane.

The protein belongs to the cation diffusion facilitator (CDF) transporter (TC 2.A.4) family. SLC30A subfamily. As to quaternary structure, homooligomer.

The protein localises to the golgi apparatus membrane. It localises to the cytoplasmic vesicle. The protein resides in the golgi apparatus. It is found in the trans-Golgi network. Its subcellular location is the sarcoplasmic reticulum. The protein localises to the mitochondrion. It catalyses the reaction Zn(2+)(in) = Zn(2+)(out). In terms of biological role, zinc ion transporter mediating zinc entry from the cytosol into the lumen of organelles along the secretory pathway. By contributing to zinc ion homeostasis within the early secretory pathway, regulates the activation and folding of enzymes like alkaline phosphatases. This chain is Zinc transporter 7 (slc30a7), found in Xenopus tropicalis (Western clawed frog).